The primary structure comprises 359 residues: 4-galactosyl-N-acetylglucosaminide 3-alpha-L-fucosyltransferase FUT6 (359 aa).

The Cytoplasmic portion of the chain corresponds to Met-1 to Arg-14. The chain crosses the membrane as a helical; Signal-anchor for type II membrane protein span at residues Cys-15 to Leu-34. The Lumenal segment spans residues Arg-35–Thr-359. N-linked (GlcNAc...) asparagine glycans are attached at residues Asn-46, Asn-91, Asn-153, and Asn-184. The determines site-specific fucosylation stretch occupies residues Lys-73 to Val-112.

The protein belongs to the glycosyltransferase 10 family. In terms of assembly, homodimer and monomer. Monomer (secreted form). N-glycosylated. Post-translationally, proteolytic cleavage releases a secreted glycoform of 43 kDa.

Its subcellular location is the golgi apparatus. The protein resides in the golgi stack membrane. It localises to the secreted. The catalysed reaction is a beta-D-galactosyl-(1-&gt;4)-N-acetyl-beta-D-glucosaminyl derivative + GDP-beta-L-fucose = a beta-D-galactosyl-(1-&gt;4)-[alpha-L-fucosyl-(1-&gt;3)]-N-acetyl-beta-D-glucosaminyl derivative + GDP + H(+). It carries out the reaction an N-acetyl-alpha-neuraminyl-(2-&gt;3)-beta-D-galactosyl-(1-&gt;4)-N-acetyl-beta-D-glucosaminyl derivative + GDP-beta-L-fucose = an alpha-Neu5Ac-(2-&gt;3)-beta-D-Gal-(1-&gt;4)-[alpha-L-Fuc-(1-&gt;3)]-beta-D-GlcNAc derivative + GDP + H(+). The enzyme catalyses an alpha-Neu5Ac-(2-&gt;3)-beta-D-Gal-(1-&gt;4)-beta-D-GlcNAc-(1-&gt;3)-beta-D-Gal-(1-&gt;4)-[alpha-L-Fuc-(1-&gt;3)]-beta-D-GlcNAc derivative + GDP-beta-L-fucose = an alpha-Neu5Ac-(2-&gt;3)-beta-D-Gal-(1-&gt;4)-[alpha-L-Fuc-(1-&gt;3)]-beta-D-GlcNAc-(1-&gt;3)-beta-D-Gal-(1-&gt;4)-[alpha-L-Fuc-(1-&gt;3)]-beta-D-GlcNAc derivative + GDP + H(+). It catalyses the reaction a neolactoside nLc6Cer + GDP-beta-L-fucose = beta-D-Gal-(1-&gt;4)-[alpha-L-Fuc-(1-&gt;3)]-beta-D-GlcNAc-(1-&gt;3)-beta-D-Gal-(1-&gt;4)-beta-D-GlcNAc-(1-&gt;3)-beta-D-Gal-(1-&gt;4)-beta-D-Glc-(1&lt;-&gt;1')-Cer + GDP + H(+). The catalysed reaction is a neolactoside nLc6Cer + GDP-beta-L-fucose = beta-D-galactosyl-(1-&gt;4)-N-acetyl-beta-D-glucosaminyl-(1-&gt;3)-beta-D-galactosyl-(1-&gt;4)-[alpha-L-fucosyl-(1-&gt;3)]-N-acetyl-beta-D-glucosaminyl-(1-&gt;3)-beta-D-galactosyl-(1-&gt;4)-beta-D-glucosyl-(1&lt;-&gt;1')-ceramide + GDP + H(+). It carries out the reaction a neolactoside VI(3)-alpha-NeuNAc-nLc6Cer + GDP-beta-L-fucose = a neolactoside VI(3)-alpha-NeuAc,V(3)-alphaFuc-nLc6Cer + GDP + H(+). The enzyme catalyses beta-D-galactosyl-(1-&gt;4)-N-acetyl-D-glucosamine + GDP-beta-L-fucose = beta-D-galactosyl-(1-&gt;4)-[alpha-L-fucosyl-(1-&gt;3)]-N-acetyl-D-glucosamine + GDP + H(+). It catalyses the reaction N-acetyl-alpha-neuraminosyl-(2-&gt;3)-beta-D-galactosyl-(1-&gt;4)-N-acetyl-beta-D-glucosamine + GDP-beta-L-fucose = N-acetyl-alpha-neuraminosyl-(2-&gt;3)-beta-D-galactosyl-(1-&gt;4)-[alpha-L-fucosyl-(1-&gt;3)]-N-acetyl-beta-D-glucosamine + GDP + H(+). The catalysed reaction is lactose + GDP-beta-L-fucose = beta-D-galactosyl-(1-&gt;4)-[alpha-L-fucosyl-(1-&gt;3)]-D-glucose + GDP + H(+). It carries out the reaction alpha-L-Fuc-(1-&gt;2)-beta-D-Gal-(1-&gt;4)-D-Glc + GDP-beta-L-fucose = alpha-L-Fuc-(1-&gt;2)-beta-D-Gal-(1-&gt;4)-[alpha-L-Fuc-(1-&gt;3)]-D-Glc + GDP + H(+). The enzyme catalyses a beta-D-galactosyl-(1-&gt;4)-N-acetyl-beta-D-6-sulfooxy-glucosaminyl derivative + GDP-beta-L-fucose = a beta-D-galactosyl-(1-&gt;4)-[alpha-L-fucosyl-(1-&gt;3)]-N-acetyl-beta-D-6-sulfooxy-glucosaminyl derivative + GDP + H(+). It functions in the pathway protein modification; protein glycosylation. Functionally, catalyzes the transfer of L-fucose, from a guanosine diphosphate-beta-L-fucose, to the N-acetyl glucosamine (GlcNAc) of a distal alpha2,3 sialylated lactosamine unit of a glycoprotein- or glycolipid-linked sialopolylactosamines chain or of a distal or internal lactosamine unit of a neutral glycoprotein- or glycolipid-linked polylactosamines chain through an alpha-1,3 glycosidic linkage and participates in surface expression of the sialyl Lewis X (sLe(x)), Lewis X (Le(x)) and non sialylated VIM2 determinants. Moreover transfers fucose to H-type 2 (Fucalpha1-2Galbeta1-4GlcNAc) chain acceptor substrates and participates in difucosylated sialyl Lewis x determinants. Also fucosylates a polylactosamine substrate having a 6 sulfate modification at the GlcNAc moiety and gives rise to sialyl and non-sialyl 6-sulfo lewis X. Does not have activity towards type 1 ((Galbeta1-3GlcNAc)) and H-type 1 chain (Fucalpha1-2Galbeta1-3GlcNAc) acceptors substrates. The sequence is that of 4-galactosyl-N-acetylglucosaminide 3-alpha-L-fucosyltransferase FUT6 from Pan troglodytes (Chimpanzee).